Consider the following 106-residue polypeptide: Iron-sulfur cluster assembly protein CyaY (106 aa).

This sequence belongs to the frataxin family.

Its function is as follows. Involved in iron-sulfur (Fe-S) cluster assembly. May act as a regulator of Fe-S biogenesis. The polypeptide is Iron-sulfur cluster assembly protein CyaY (Shigella flexneri serotype 5b (strain 8401)).